We begin with the raw amino-acid sequence, 228 residues long: Phosphatidate cytidylyltransferase (228 aa).

Helical transmembrane passes span 31–51 (FVIA…LVGL), 65–85 (INYL…LIFL), 93–113 (LVIM…MIGG), 131–151 (WTGL…VSLI), 165–185 (IYLF…DLFI), and 206–226 (GVLD…CINI).

Belongs to the CDS family.

It localises to the cell membrane. It carries out the reaction a 1,2-diacyl-sn-glycero-3-phosphate + CTP + H(+) = a CDP-1,2-diacyl-sn-glycerol + diphosphate. The protein operates within phospholipid metabolism; CDP-diacylglycerol biosynthesis; CDP-diacylglycerol from sn-glycerol 3-phosphate: step 3/3. The polypeptide is Phosphatidate cytidylyltransferase (cdsA) (Rickettsia prowazekii (strain Madrid E)).